Consider the following 185-residue polypeptide: Ribosome-recycling factor (185 aa).

This sequence belongs to the RRF family.

It is found in the cytoplasm. In terms of biological role, responsible for the release of ribosomes from messenger RNA at the termination of protein biosynthesis. May increase the efficiency of translation by recycling ribosomes from one round of translation to another. This chain is Ribosome-recycling factor, found in Tolumonas auensis (strain DSM 9187 / NBRC 110442 / TA 4).